A 212-amino-acid polypeptide reads, in one-letter code: Leucyl/phenylalanyl-tRNA--protein transferase (212 aa).

The protein belongs to the L/F-transferase family.

Its subcellular location is the cytoplasm. The catalysed reaction is N-terminal L-lysyl-[protein] + L-leucyl-tRNA(Leu) = N-terminal L-leucyl-L-lysyl-[protein] + tRNA(Leu) + H(+). It catalyses the reaction N-terminal L-arginyl-[protein] + L-leucyl-tRNA(Leu) = N-terminal L-leucyl-L-arginyl-[protein] + tRNA(Leu) + H(+). The enzyme catalyses L-phenylalanyl-tRNA(Phe) + an N-terminal L-alpha-aminoacyl-[protein] = an N-terminal L-phenylalanyl-L-alpha-aminoacyl-[protein] + tRNA(Phe). Functionally, functions in the N-end rule pathway of protein degradation where it conjugates Leu, Phe and, less efficiently, Met from aminoacyl-tRNAs to the N-termini of proteins containing an N-terminal arginine or lysine. The protein is Leucyl/phenylalanyl-tRNA--protein transferase of Jannaschia sp. (strain CCS1).